Reading from the N-terminus, the 175-residue chain is B9 domain-containing protein 2 (175 aa).

Positions 2–118 constitute a C2 B9-type domain; that stretch reads AEVHVIGQII…ACPTWRPLGS (117 aa).

This sequence belongs to the B9D family. In terms of assembly, part of the tectonic-like complex (also named B9 complex). Interacts with TUBG1.

It localises to the cytoplasm. The protein localises to the cytoskeleton. It is found in the cilium basal body. Its subcellular location is the cilium axoneme. The protein resides in the nucleus. Its function is as follows. Component of the tectonic-like complex, a complex localized at the transition zone of primary cilia and acting as a barrier that prevents diffusion of transmembrane proteins between the cilia and plasma membranes. The sequence is that of B9 domain-containing protein 2 (B9D2) from Homo sapiens (Human).